Consider the following 87-residue polypeptide: DNA/RNA-binding protein Alba (87 aa).

The residue at position 9 (Lys9) is an N6-acetyllysine.

The protein belongs to the histone-like Alba family. Acetylated. Acetylation at Lys-9 decreases DNA-binding affinity.

Its subcellular location is the cytoplasm. The protein localises to the chromosome. Functionally, binds double-stranded DNA tightly but without sequence specificity. Involved in DNA compaction. This Methanocaldococcus jannaschii (strain ATCC 43067 / DSM 2661 / JAL-1 / JCM 10045 / NBRC 100440) (Methanococcus jannaschii) protein is DNA/RNA-binding protein Alba.